The primary structure comprises 343 residues: Protein RecA (343 aa).

66 to 73 serves as a coordination point for ATP; that stretch reads GPESSGKT.

This sequence belongs to the RecA family.

The protein resides in the cytoplasm. Functionally, can catalyze the hydrolysis of ATP in the presence of single-stranded DNA, the ATP-dependent uptake of single-stranded DNA by duplex DNA, and the ATP-dependent hybridization of homologous single-stranded DNAs. It interacts with LexA causing its activation and leading to its autocatalytic cleavage. This is Protein RecA from Rickettsia bellii (strain OSU 85-389).